The chain runs to 443 residues: Glutamyl-tRNA reductase (443 aa).

Substrate is bound by residues 49-52 (TCNR), S109, 114-116 (ETQ), and Q120. Residue C50 is the Nucleophile of the active site. Residue 189–194 (GAGDMS) participates in NADP(+) binding.

It belongs to the glutamyl-tRNA reductase family. In terms of assembly, homodimer.

The enzyme catalyses (S)-4-amino-5-oxopentanoate + tRNA(Glu) + NADP(+) = L-glutamyl-tRNA(Glu) + NADPH + H(+). It participates in porphyrin-containing compound metabolism; protoporphyrin-IX biosynthesis; 5-aminolevulinate from L-glutamyl-tRNA(Glu): step 1/2. In terms of biological role, catalyzes the NADPH-dependent reduction of glutamyl-tRNA(Glu) to glutamate 1-semialdehyde (GSA). The sequence is that of Glutamyl-tRNA reductase from Staphylococcus saprophyticus subsp. saprophyticus (strain ATCC 15305 / DSM 20229 / NCIMB 8711 / NCTC 7292 / S-41).